A 339-amino-acid polypeptide reads, in one-letter code: Heat-inducible transcription repressor HrcA (339 aa).

The protein belongs to the HrcA family.

Functionally, negative regulator of class I heat shock genes (grpE-dnaK-dnaJ and groELS operons). Prevents heat-shock induction of these operons. In Cutibacterium acnes (strain DSM 16379 / KPA171202) (Propionibacterium acnes), this protein is Heat-inducible transcription repressor HrcA.